We begin with the raw amino-acid sequence, 22 residues long: 2.4 kDa venom peptide (22 aa).

Post-translationally, contains 2 disulfide bonds. As to expression, expressed by the venom gland.

Its subcellular location is the secreted. In terms of biological role, not lethal to mice by intraperitoneal or intracerebroventricular injections in doses up to 150 micrograms. In Heterometrus spinifer (Asia giant forest scorpion), this protein is 2.4 kDa venom peptide.